Consider the following 481-residue polypeptide: uncharacterized protein (481 aa).

This sequence belongs to the metallophosphoesterase superfamily.

This is an uncharacterized protein from Bacillus subtilis (strain 168).